The following is a 217-amino-acid chain: MNKLYSLFLFLFIQLSIKYYNAKVTVDTVCKKGFLIQMSGHLECKCENDLVLVNEETCEEKVLKCDETTVNKPCGDFSKCIKIDGSPISYACKCNPGYDMVNNVCILNECKNVTCGNGKCILDTSNPVKTGVCSCNIGKVPNADDKNKCSKDGETKCSLKCLKENETCKAVDGIYKCDCKDGFIMDNESSTCTAFSVYNILNLSLIFVLFSVCFFIM.

Positions 1 to 16 (MNKLYSLFLFLFIQLS) are cleaved as a signal peptide. In terms of domain architecture, EGF-like 1; truncated spans 30–59 (CKKGFLIQMSGHLECKCENDLVLVNEETCE). EGF-like domains follow at residues 61–106 (KVLK…NVCI), 106–150 (ILNE…NKCS), and 153–193 (GETK…STCT). Intrachain disulfides connect cysteine 65/cysteine 80, cysteine 74/cysteine 92, cysteine 94/cysteine 105, cysteine 110/cysteine 120, cysteine 115/cysteine 133, cysteine 135/cysteine 149, cysteine 157/cysteine 168, cysteine 161/cysteine 177, and cysteine 179/cysteine 192. Residue asparagine 112 is glycosylated (N-linked (GlcNAc...) asparagine). 2 N-linked (GlcNAc...) asparagine glycosylation sites follow: asparagine 165 and asparagine 187. Serine 196 carries GPI-anchor amidated serine lipidation. A propeptide spans 197-217 (VYNILNLSLIFVLFSVCFFIM) (removed in mature form). Asparagine 202 is a glycosylation site (N-linked (GlcNAc...) asparagine).

Its subcellular location is the cell membrane. The sequence is that of 25 kDa ookinete surface antigen from Plasmodium reichenowi.